Here is a 103-residue protein sequence, read N- to C-terminus: MQTQKIRIRLKAYDYALIDRSAQEIVETAKRTGAVVKGPIPLPTKIERFNILRSPHMNKTSREQLEIRTHLRLMDIVDWTDKTTDALMKLDLPAGVDVEIKVQ.

Belongs to the universal ribosomal protein uS10 family. Part of the 30S ribosomal subunit.

In terms of biological role, involved in the binding of tRNA to the ribosomes. This chain is Small ribosomal subunit protein uS10, found in Neisseria gonorrhoeae.